A 674-amino-acid chain; its full sequence is Dymeclin (674 aa).

A lipid anchor (N-myristoyl glycine) is attached at Gly-2.

The protein belongs to the dymeclin family. Interacts with GOLM1 and PPIB. In terms of processing, myristoylated in vitro; myristoylation is not essential for protein targeting to Golgi compartment.

The protein localises to the cytoplasm. It is found in the golgi apparatus. Its subcellular location is the membrane. Functionally, necessary for correct organization of Golgi apparatus. Involved in bone development. The protein is Dymeclin (Dym) of Rattus norvegicus (Rat).